A 315-amino-acid polypeptide reads, in one-letter code: MIGMEKPKIETVVLAEDNSYGKFVVEPLERGYGITLGNSLRRILLSSLPGAAVTSVKIDGVLHEFSTLPGVVEDVTDIILNLKQLSLRMHSDEPKVLRLHAEGEGEVTAGDIHTDADVEILNPDLHIATLDKGGRLIAEITVSKGRGYVPADQNKTPDMPIGVIPVDSIFSPIRRVNYTIEHTRVGNKTNYDKLTLEVWTNGAIRPDEACSWAAKILKEHLELFISLTEDADEIEVMQEKEDDERNKLMEMTIEELDLSVRSYNCLKRAGINTIAELVSKTDEEMMKVRNLGKKSLEEVKTKLAAFGLSLRQPDD.

Residues 1-228 are alpha N-terminal domain (alpha-NTD); sequence MIGMEKPKIE…EHLELFISLT (228 aa). An alpha C-terminal domain (alpha-CTD) region spans residues 245–315; the sequence is RNKLMEMTIE…FGLSLRQPDD (71 aa).

Belongs to the RNA polymerase alpha chain family. Homodimer. The RNAP catalytic core consists of 2 alpha, 1 beta, 1 beta' and 1 omega subunit. When a sigma factor is associated with the core the holoenzyme is formed, which can initiate transcription.

It catalyses the reaction RNA(n) + a ribonucleoside 5'-triphosphate = RNA(n+1) + diphosphate. Its function is as follows. DNA-dependent RNA polymerase catalyzes the transcription of DNA into RNA using the four ribonucleoside triphosphates as substrates. The chain is DNA-directed RNA polymerase subunit alpha from Symbiobacterium thermophilum (strain DSM 24528 / JCM 14929 / IAM 14863 / T).